The primary structure comprises 564 residues: Pachytene checkpoint protein 2 (564 aa).

314-321 (GPPGTGKT) contacts ATP.

This sequence belongs to the AAA ATPase family. PCH2 subfamily.

The protein localises to the nucleus. It localises to the nucleolus. It is found in the chromosome. Its function is as follows. Required for the pachytene checkpoint, the meiotic checkpoint that prevents chromosome segregation when defects in recombination and synaptonemal complex formation occurred. Represses meiotic recombination in the rDNA, probably by excluding the meiosis-specific protein HOP1 from the nucleolar region. This chain is Pachytene checkpoint protein 2 (PCH2), found in Saccharomyces cerevisiae (strain ATCC 204508 / S288c) (Baker's yeast).